We begin with the raw amino-acid sequence, 415 residues long: NAD-dependent protein deacetylase hst4 (415 aa).

The disordered stretch occupies residues 1-26 (MKVEEHVPLIQESRKRKCQSSENASK). The region spanning 40–337 (TGNENVDLSP…RRLKPLLDAP (298 aa)) is the Deacetylase sirtuin-type domain. Residues 65–84 (GAGI…EGLF) and 153–156 (QNID) contribute to the NAD(+) site. The active-site Proton acceptor is the His-184. Positions 192, 195, 214, and 217 each coordinate Zn(2+). NAD(+) contacts are provided by residues 273-275 (GTS), 303-305 (NYD), and Leu-323.

It belongs to the sirtuin family. Class I subfamily. Zn(2+) serves as cofactor.

Its subcellular location is the nucleus. It localises to the nucleolus. It catalyses the reaction N(6)-acetyl-L-lysyl-[protein] + NAD(+) + H2O = 2''-O-acetyl-ADP-D-ribose + nicotinamide + L-lysyl-[protein]. Functionally, NAD-dependent histone deacetylase, which contributes to both telomeric and centromeric silencing, proper cell cycle progression, DNA damage control, recombination, and genomic maintenance. This is NAD-dependent protein deacetylase hst4 (hst4) from Schizosaccharomyces pombe (strain 972 / ATCC 24843) (Fission yeast).